The chain runs to 257 residues: Phosphate import ATP-binding protein PstB (257 aa).

The ABC transporter domain occupies 11 to 252 (FNISRLYLYI…PKNELTEKYV (242 aa)). 43–50 (GPSGSGKS) contacts ATP.

This sequence belongs to the ABC transporter superfamily. Phosphate importer (TC 3.A.1.7) family. The complex is composed of two ATP-binding proteins (PstB), two transmembrane proteins (PstC and PstA) and a solute-binding protein (PstS).

It localises to the cell membrane. It carries out the reaction phosphate(out) + ATP + H2O = ADP + 2 phosphate(in) + H(+). Part of the ABC transporter complex PstSACB involved in phosphate import. Responsible for energy coupling to the transport system. In Saccharolobus solfataricus (strain ATCC 35092 / DSM 1617 / JCM 11322 / P2) (Sulfolobus solfataricus), this protein is Phosphate import ATP-binding protein PstB.